We begin with the raw amino-acid sequence, 243 residues long: CRISPR-associated endoribonuclease Cas6 (243 aa).

Belongs to the CRISPR-associated endoribonuclease Cas6 family. In terms of assembly, part of the Csm effector complex that includes at least Cas10(1), Csm2(3), Csm3(5), Csm4(1); the presence of Csm5 and Cas6 may depend on the processing state of precursor crRNA. Csm with a precursor crRNA does not include Csm5, while Cas6, the enzyme probably involved in pre-crRNA processing, is found associated with a subset of the Csm complex that is probably in the process of pre-crRNA maturation. The Csm complex is elongated and slightly twisted with a maximal length of 215 Angstroms and a diameter of 75-80 Angstroms. It has been modeled to have a central protein filamant of Csm3 subunits along which the dsRNA helix of paired crRNA and target RNA binds. The filament is capped at one end by Cas10 and Csm4 and at the other end by Csm5; ssDNA is thought to bind to the N-terminal HD domain of Cas10.

Functionally, CRISPR (clustered regularly interspaced short palindromic repeat) is an adaptive immune system that provides protection against mobile genetic elements (viruses, transposable elements and conjugative plasmids). CRISPR clusters contain spacers, sequences complementary to antecedent mobile elements, and target invading nucleic acids. CRISPR clusters are transcribed and processed into CRISPR RNA (crRNA). The type III-A Csm effector complex binds crRNA and acts as a crRNA-guided RNase, DNase and cyclic oligoadenylate synthase; binding of target RNA cognate to the crRNA is required for all activities. In a heterologous host this Csm effector complex restricts ssRNA phage MS2, suggesting it may target RNA viruses in vivo. In terms of biological role, csm functions as a non-specific ssDNase. Base-pairing between crRNA and target RNA to form a ternary Csm complex activates a ssDNase activity; target RNA cleavage suppresses the ssDNase, a temporal control that prevents uncontrolled DNA degradation. Viral RNA transcripts probably tether the Csm complex to the viral genome, recruiting Cas10 ssDNA activity which is able to degrade DNA in the transcription bubble, spatially controlling the DNase activity. This protein processes pre-crRNA into individual crRNA units. The chain is CRISPR-associated endoribonuclease Cas6 from Streptococcus thermophilus.